Here is a 664-residue protein sequence, read N- to C-terminus: ATP-dependent RNA helicase MSS116, mitochondrial (664 aa).

The N-terminal 26 residues, 1 to 26 (MLTSILIKGRTPVLASRNLLAALSNC), are a transit peptide targeting the mitochondrion. The segment at 42–79 (NRDQRNFGRNQRNNNSNRYRNSRFNSRPRTRSREDDDE) is disordered. Positions 48–68 (FGRNQRNNNSNRYRNSRFNSR) are enriched in low complexity. The Q motif signature appears at 106–134 (SLLEEGVLDKEIHKAITRMEFPGLTPVQQ). A Helicase ATP-binding domain is found at 139-326 (PILSSEDHDV…NNIMNKKECL (188 aa)). Residue 152–159 (AKTGTGKT) participates in ATP binding. The short motif at 267-270 (DEAD) is the DEAD box element. The Helicase C-terminal domain maps to 355 to 512 (SIFAAVEHIK…EKYEPSEEIK (158 aa)). The segment at 602-664 (GNNKSYDYDD…NYSSRNSNIY (63 aa)) is disordered. The span at 628–638 (QNRDYDDEPFR) shows a compositional bias: basic and acidic residues. Residues 639–649 (RSNNNRRSFSR) are compositionally biased toward low complexity. Residues 653–664 (KNNYSSRNSNIY) are compositionally biased toward polar residues.

It belongs to the DEAD box helicase family. DDX18/HAS1 subfamily.

It is found in the mitochondrion matrix. It catalyses the reaction ATP + H2O = ADP + phosphate + H(+). ATP-dependent RNA helicase required for mitochondrial splicing of group I and II introns. Specifically involved in the ATP-dependent splicing of the bl1 intron of COB. Also required for efficient mitochondrial translation. The protein is ATP-dependent RNA helicase MSS116, mitochondrial (MSS116) of Saccharomyces cerevisiae (strain ATCC 204508 / S288c) (Baker's yeast).